Here is a 374-residue protein sequence, read N- to C-terminus: Type IV secretion system protein PtlG (374 aa).

A helical membrane pass occupies residues 38 to 56; the sequence is WMFALVAVALSCLLATGIW. Residues 86-117 form a disordered region; it reads HPREPEPAPLPDMPAAPDPILPQPRPAPPVPP. Pro residues predominate over residues 92–117; the sequence is PAPLPDMPAAPDPILPQPRPAPPVPP.

The protein belongs to the TrbI/VirB10 family.

Its subcellular location is the cell membrane. Its function is as follows. Component of the type IV secretion system ptl required for secretion of assembled pertussis toxin (PTX) through the outer membrane. The sequence is that of Type IV secretion system protein PtlG (ptlG) from Bordetella pertussis (strain Tohama I / ATCC BAA-589 / NCTC 13251).